The sequence spans 40 residues: Photosystem II reaction center protein J (40 aa).

A helical membrane pass occupies residues 8–28 (IPLWLIGTVTGIIVIGLLGVF).

The protein belongs to the PsbJ family. As to quaternary structure, PSII is composed of 1 copy each of membrane proteins PsbA, PsbB, PsbC, PsbD, PsbE, PsbF, PsbH, PsbI, PsbJ, PsbK, PsbL, PsbM, PsbT, PsbX, PsbY, PsbZ, Psb30/Ycf12, at least 3 peripheral proteins of the oxygen-evolving complex and a large number of cofactors. It forms dimeric complexes.

The protein localises to the plastid. The protein resides in the chloroplast thylakoid membrane. One of the components of the core complex of photosystem II (PSII). PSII is a light-driven water:plastoquinone oxidoreductase that uses light energy to abstract electrons from H(2)O, generating O(2) and a proton gradient subsequently used for ATP formation. It consists of a core antenna complex that captures photons, and an electron transfer chain that converts photonic excitation into a charge separation. The protein is Photosystem II reaction center protein J of Pinus thunbergii (Japanese black pine).